A 98-amino-acid polypeptide reads, in one-letter code: Co-chaperonin GroES (98 aa).

This sequence belongs to the GroES chaperonin family. In terms of assembly, heptamer of 7 subunits arranged in a ring. Interacts with the chaperonin GroEL.

It is found in the cytoplasm. Functionally, together with the chaperonin GroEL, plays an essential role in assisting protein folding. The GroEL-GroES system forms a nano-cage that allows encapsulation of the non-native substrate proteins and provides a physical environment optimized to promote and accelerate protein folding. GroES binds to the apical surface of the GroEL ring, thereby capping the opening of the GroEL channel. The sequence is that of Co-chaperonin GroES from Rhizobium leguminosarum bv. trifolii (strain WSM2304).